The following is a 134-amino-acid chain: RxLR effector protein 4 (134 aa).

Residues 1 to 22 form the signal peptide; sequence MRSLFYIAVAVAVFARSSAVAA. A disordered region spans residues 43–65; sequence AMASSDSRKRFLRATDPEDGDLQ. Basic and acidic residues predominate over residues 48–58; the sequence is DSRKRFLRATD. The RxLR-dEER motif lies at 52–71; that stretch reads RFLRATDPEDGDLQADDEER.

The protein belongs to the RxLR effector family.

It localises to the secreted. Effector that enhances plant susceptibility to P.parasitica in Nicotiana benthamiana and Arabidopsis thaliana. Triggers non-specific cell death in a variety of plants, including tobacco, tomato, potato and A.thaliana. E4-induced cell death is dependent on HSP90, NPK and SGT1, suggesting that PpE4 is recognized by the plant immune system. The polypeptide is RxLR effector protein 4 (Phytophthora nicotianae (strain INRA-310) (Phytophthora parasitica)).